The primary structure comprises 139 residues: ATP synthase epsilon chain, chloroplastic (139 aa).

It belongs to the ATPase epsilon chain family. In terms of assembly, F-type ATPases have 2 components, CF(1) - the catalytic core - and CF(0) - the membrane proton channel. CF(1) has five subunits: alpha(3), beta(3), gamma(1), delta(1), epsilon(1). CF(0) has three main subunits: a, b and c.

The protein localises to the plastid. The protein resides in the chloroplast thylakoid membrane. Produces ATP from ADP in the presence of a proton gradient across the membrane. In Welwitschia mirabilis (Tree tumbo), this protein is ATP synthase epsilon chain, chloroplastic.